Here is a 493-residue protein sequence, read N- to C-terminus: GTPase Der (493 aa).

Residues 3-166 form the EngA-type G 1 domain; that stretch reads PVIALVGRPN…EALGIFPKDN (164 aa). Residues 9–16, 56–60, and 118–121 each bind GTP; these read GRPNVGKS, DTGGI, and NKVD. Positions 166-195 are disordered; that stretch reads NAEEEGEGEPASEEVAEGEEPTRIPGPSEK. The span at 167–184 shows a compositional bias: acidic residues; it reads AEEEGEGEPASEEVAEGE. The 174-residue stretch at 198-371 folds into the EngA-type G 2 domain; it reads IKIAIIGRPN…SVQESFRSAV (174 aa). GTP contacts are provided by residues 204 to 211, 251 to 255, and 316 to 319; these read GRPNVGKS, DTAGV, and NKWD. Residues 372-456 form the KH-like domain; the sequence is TRWPTSRLTS…PIRIEYKGGE (85 aa). A compositionally biased stretch (basic and acidic residues) spans 454-463; the sequence is GGENPYEGKK. The interval 454 to 493 is disordered; the sequence is GGENPYEGKKNSLTARQVNKKRRLMSHHKKAEKKKKDKRR. Residues 471 to 493 are compositionally biased toward basic residues; the sequence is VNKKRRLMSHHKKAEKKKKDKRR.

It belongs to the TRAFAC class TrmE-Era-EngA-EngB-Septin-like GTPase superfamily. EngA (Der) GTPase family. Associates with the 50S ribosomal subunit.

Functionally, GTPase that plays an essential role in the late steps of ribosome biogenesis. The sequence is that of GTPase Der from Pseudomonas aeruginosa (strain UCBPP-PA14).